Here is a 397-residue protein sequence, read N- to C-terminus: DNA-directed RNA polymerase subunit Rpo1C (397 aa).

It belongs to the RNA polymerase beta' chain family. As to quaternary structure, part of the RNA polymerase complex.

It is found in the cytoplasm. The catalysed reaction is RNA(n) + a ribonucleoside 5'-triphosphate = RNA(n+1) + diphosphate. DNA-dependent RNA polymerase (RNAP) catalyzes the transcription of DNA into RNA using the four ribonucleoside triphosphates as substrates. Forms part of the jaw domain. This chain is DNA-directed RNA polymerase subunit Rpo1C, found in Pyrococcus horikoshii (strain ATCC 700860 / DSM 12428 / JCM 9974 / NBRC 100139 / OT-3).